The primary structure comprises 186 residues: ATP synthase subunit delta (186 aa).

The protein belongs to the ATPase delta chain family. As to quaternary structure, F-type ATPases have 2 components, F(1) - the catalytic core - and F(0) - the membrane proton channel. F(1) has five subunits: alpha(3), beta(3), gamma(1), delta(1), epsilon(1). F(0) has three main subunits: a(1), b(2) and c(10-14). The alpha and beta chains form an alternating ring which encloses part of the gamma chain. F(1) is attached to F(0) by a central stalk formed by the gamma and epsilon chains, while a peripheral stalk is formed by the delta and b chains.

The protein localises to the cell inner membrane. F(1)F(0) ATP synthase produces ATP from ADP in the presence of a proton or sodium gradient. F-type ATPases consist of two structural domains, F(1) containing the extramembraneous catalytic core and F(0) containing the membrane proton channel, linked together by a central stalk and a peripheral stalk. During catalysis, ATP synthesis in the catalytic domain of F(1) is coupled via a rotary mechanism of the central stalk subunits to proton translocation. Functionally, this protein is part of the stalk that links CF(0) to CF(1). It either transmits conformational changes from CF(0) to CF(1) or is implicated in proton conduction. The sequence is that of ATP synthase subunit delta from Ruegeria pomeroyi (strain ATCC 700808 / DSM 15171 / DSS-3) (Silicibacter pomeroyi).